We begin with the raw amino-acid sequence, 223 residues long: Thymidine kinase (223 aa).

ATP contacts are provided by residues 19–26 (GPMFAGKT) and 96–99 (DEVQ). E97 acts as the Proton acceptor in catalysis. The Zn(2+) site is built by C153, C156, C191, and H194.

The protein belongs to the thymidine kinase family. Homotetramer.

It localises to the cytoplasm. It catalyses the reaction thymidine + ATP = dTMP + ADP + H(+). This Ureaplasma parvum serovar 3 (strain ATCC 27815 / 27 / NCTC 11736) protein is Thymidine kinase.